The following is a 358-amino-acid chain: Cyclin-dependent kinase 11 (358 aa).

A Protein kinase domain is found at 52–336 (FKKLYTINEG…ASDALKHPYF (285 aa)). ATP is bound by residues 58 to 66 (INEGAFGVV) and Lys81. Residue Asp176 is the Proton acceptor of the active site.

This sequence belongs to the protein kinase superfamily. CMGC Ser/Thr protein kinase family. CDC2/CDKX subfamily.

It catalyses the reaction L-seryl-[protein] + ATP = O-phospho-L-seryl-[protein] + ADP + H(+). The enzyme catalyses L-threonyl-[protein] + ATP = O-phospho-L-threonyl-[protein] + ADP + H(+). This chain is Cyclin-dependent kinase 11 (cdk11), found in Dictyostelium discoideum (Social amoeba).